The primary structure comprises 249 residues: Putative S-adenosyl-L-methionine-dependent methyltransferase Mkms_0592 (249 aa).

S-adenosyl-L-methionine-binding positions include aspartate 111 and 141–142 (DL).

Belongs to the UPF0677 family.

Functionally, exhibits S-adenosyl-L-methionine-dependent methyltransferase activity. This Mycobacterium sp. (strain KMS) protein is Putative S-adenosyl-L-methionine-dependent methyltransferase Mkms_0592.